We begin with the raw amino-acid sequence, 211 residues long: ATP-dependent Clp protease proteolytic subunit (211 aa).

Ser-106 functions as the Nucleophile in the catalytic mechanism. His-131 is a catalytic residue.

The protein belongs to the peptidase S14 family. As to quaternary structure, fourteen ClpP subunits assemble into 2 heptameric rings which stack back to back to give a disk-like structure with a central cavity, resembling the structure of eukaryotic proteasomes.

It is found in the cytoplasm. The catalysed reaction is Hydrolysis of proteins to small peptides in the presence of ATP and magnesium. alpha-casein is the usual test substrate. In the absence of ATP, only oligopeptides shorter than five residues are hydrolyzed (such as succinyl-Leu-Tyr-|-NHMec, and Leu-Tyr-Leu-|-Tyr-Trp, in which cleavage of the -Tyr-|-Leu- and -Tyr-|-Trp bonds also occurs).. Functionally, cleaves peptides in various proteins in a process that requires ATP hydrolysis. Has a chymotrypsin-like activity. Plays a major role in the degradation of misfolded proteins. The polypeptide is ATP-dependent Clp protease proteolytic subunit (Nitrobacter hamburgensis (strain DSM 10229 / NCIMB 13809 / X14)).